We begin with the raw amino-acid sequence, 203 residues long: Imidazoleglycerol-phosphate dehydratase (203 aa).

Belongs to the imidazoleglycerol-phosphate dehydratase family.

Its subcellular location is the cytoplasm. It catalyses the reaction D-erythro-1-(imidazol-4-yl)glycerol 3-phosphate = 3-(imidazol-4-yl)-2-oxopropyl phosphate + H2O. Its pathway is amino-acid biosynthesis; L-histidine biosynthesis; L-histidine from 5-phospho-alpha-D-ribose 1-diphosphate: step 6/9. The protein is Imidazoleglycerol-phosphate dehydratase of Deinococcus geothermalis (strain DSM 11300 / CIP 105573 / AG-3a).